The following is a 325-amino-acid chain: Acetyl-coenzyme A carboxylase carboxyl transferase subunit alpha (325 aa).

The CoA carboxyltransferase C-terminal domain occupies 38–292 (RLEDRLAKLQ…DETLKQSLKT (255 aa)).

It belongs to the AccA family. As to quaternary structure, acetyl-CoA carboxylase is a heterohexamer composed of biotin carboxyl carrier protein (AccB), biotin carboxylase (AccC) and two subunits each of ACCase subunit alpha (AccA) and ACCase subunit beta (AccD).

It is found in the cytoplasm. The catalysed reaction is N(6)-carboxybiotinyl-L-lysyl-[protein] + acetyl-CoA = N(6)-biotinyl-L-lysyl-[protein] + malonyl-CoA. It functions in the pathway lipid metabolism; malonyl-CoA biosynthesis; malonyl-CoA from acetyl-CoA: step 1/1. With respect to regulation, inhibited by pyrrolidine dione antibiotics moiramide B (CPD1) and CPD2. Its function is as follows. Component of the acetyl coenzyme A carboxylase (ACC) complex. First, biotin carboxylase catalyzes the carboxylation of biotin on its carrier protein (BCCP) and then the CO(2) group is transferred by the carboxyltransferase to acetyl-CoA to form malonyl-CoA. The chain is Acetyl-coenzyme A carboxylase carboxyl transferase subunit alpha from Bacillus subtilis (strain 168).